The chain runs to 255 residues: Cell division protein DivIB (255 aa).

Topologically, residues 1–30 are cytoplasmic; sequence MKNSKVIKLQDRVPKLKNQKKRNKPPVNHR. The helical transmembrane segment at 31–51 threads the bilayer; sequence LILYISILFLLVLFLIYFRSP. Topologically, residues 52 to 255 are extracellular; the sequence is LSNIKKISVF…FKYLDDEKKK (204 aa). One can recognise a POTRA domain in the interval 53–121; that stretch reads SNIKKISVFG…NKIDIHIEEY (69 aa).

It belongs to the FtsQ/DivIB family. DivIB subfamily.

It is found in the cell membrane. In terms of biological role, cell division protein that may be involved in stabilizing or promoting the assembly of the division complex. In Bacillus cytotoxicus (strain DSM 22905 / CIP 110041 / 391-98 / NVH 391-98), this protein is Cell division protein DivIB.